A 1377-amino-acid chain; its full sequence is DNA-directed RNA polymerase subunit beta' (1377 aa).

The Zn(2+) site is built by C60, C62, C75, and C78. Residues D449, D451, and D453 each contribute to the Mg(2+) site. Residues C777, C851, C858, and C861 each contribute to the Zn(2+) site.

This sequence belongs to the RNA polymerase beta' chain family. In terms of assembly, the RNAP catalytic core consists of 2 alpha, 1 beta, 1 beta' and 1 omega subunit. When a sigma factor is associated with the core the holoenzyme is formed, which can initiate transcription. It depends on Mg(2+) as a cofactor. Zn(2+) serves as cofactor.

The catalysed reaction is RNA(n) + a ribonucleoside 5'-triphosphate = RNA(n+1) + diphosphate. In terms of biological role, DNA-dependent RNA polymerase catalyzes the transcription of DNA into RNA using the four ribonucleoside triphosphates as substrates. The protein is DNA-directed RNA polymerase subunit beta' of Borrelia recurrentis (strain A1).